The sequence spans 66 residues: Large ribosomal subunit protein bL35 (66 aa).

The tract at residues 20 to 41 (GKVMSAQRGKRHGMIKRTKKQI) is disordered. The segment covering 27–41 (RGKRHGMIKRTKKQI) has biased composition (basic residues).

It belongs to the bacterial ribosomal protein bL35 family.

The chain is Large ribosomal subunit protein bL35 from Rhodopseudomonas palustris (strain BisB5).